Here is a 752-residue protein sequence, read N- to C-terminus: Photosystem I P700 chlorophyll a apoprotein A1 (752 aa).

8 helical membrane-spanning segments follow: residues 73–96 (IFSA…FHGA), 159–182 (LYWT…FHYH), 198–222 (MNHH…HISL), 294–312 (TAHH…GHMY), 349–372 (WHAQ…HHMY), 388–414 (LSLF…IFMV), 436–458 (AIIS…LYIH), and 533–551 (FLVH…LILL). 2 residues coordinate [4Fe-4S] cluster: C575 and C584. 2 helical membrane-spanning segments follow: residues 591-612 (HIFL…HFSW) and 666-688 (LSAY…MFLF). H677 contributes to the chlorophyll a' binding site. The chlorophyll a site is built by M685 and Y693. Phylloquinone is bound at residue W694. The chain crosses the membrane as a helical span at residues 726-746 (AVGLAHYLLGGIGTTWSFFLA).

Belongs to the PsaA/PsaB family. As to quaternary structure, the PsaA/B heterodimer binds the P700 chlorophyll special pair and subsequent electron acceptors. PSI consists of a core antenna complex that captures photons, and an electron transfer chain that converts photonic excitation into a charge separation. The eukaryotic PSI reaction center is composed of at least 11 subunits. P700 is a chlorophyll a/chlorophyll a' dimer, A0 is one or more chlorophyll a, A1 is one or both phylloquinones and FX is a shared 4Fe-4S iron-sulfur center. is required as a cofactor.

It localises to the plastid. Its subcellular location is the chloroplast thylakoid membrane. It carries out the reaction reduced [plastocyanin] + hnu + oxidized [2Fe-2S]-[ferredoxin] = oxidized [plastocyanin] + reduced [2Fe-2S]-[ferredoxin]. PsaA and PsaB bind P700, the primary electron donor of photosystem I (PSI), as well as the electron acceptors A0, A1 and FX. PSI is a plastocyanin/cytochrome c6-ferredoxin oxidoreductase, converting photonic excitation into a charge separation, which transfers an electron from the donor P700 chlorophyll pair to the spectroscopically characterized acceptors A0, A1, FX, FA and FB in turn. Oxidized P700 is reduced on the lumenal side of the thylakoid membrane by plastocyanin or cytochrome c6. In Emiliania huxleyi (Coccolithophore), this protein is Photosystem I P700 chlorophyll a apoprotein A1.